Consider the following 874-residue polypeptide: Alanine--tRNA ligase (874 aa).

Zn(2+)-binding residues include H565, H569, C666, and H670.

It belongs to the class-II aminoacyl-tRNA synthetase family. Requires Zn(2+) as cofactor.

It is found in the cytoplasm. It carries out the reaction tRNA(Ala) + L-alanine + ATP = L-alanyl-tRNA(Ala) + AMP + diphosphate. Catalyzes the attachment of alanine to tRNA(Ala) in a two-step reaction: alanine is first activated by ATP to form Ala-AMP and then transferred to the acceptor end of tRNA(Ala). Also edits incorrectly charged Ser-tRNA(Ala) and Gly-tRNA(Ala) via its editing domain. This chain is Alanine--tRNA ligase, found in Polynucleobacter asymbioticus (strain DSM 18221 / CIP 109841 / QLW-P1DMWA-1) (Polynucleobacter necessarius subsp. asymbioticus).